The sequence spans 315 residues: Olfactory receptor 4A5 (315 aa).

Over 1–23 (MRQNNNITEFVLLGFSQDPGVQK) the chain is Extracellular. Residue N6 is glycosylated (N-linked (GlcNAc...) asparagine). Residues 24–47 (ALFVMFLLTYLVTVVGNLLIVVDI) form a helical membrane-spanning segment. At 48–55 (IASPSLGS) the chain is on the cytoplasmic side. Residues 56–77 (PMYFFLACLSFIDAAYSTTISP) traverse the membrane as a helical segment. The Extracellular segment spans residues 78 to 98 (KLIVGLFCDKKTISFQGCMGQ). C95 and C186 are oxidised to a cystine. Residues 99 to 118 (LFIDHFFGGAEVFLLVVMAC) traverse the membrane as a helical segment. Residues 119-137 (DRYVAICKPLHYLTIMNRQ) are Cytoplasmic-facing. Residues 138–156 (VCFLLLVVAMIGGFVHSAF) form a helical membrane-spanning segment. The Extracellular segment spans residues 157–192 (QIVVYSLPFCGPNVIVHFSCDMHPLLELACTDTYFI). Residues 193 to 216 (GLTVVVNSGAICMVIFNLLLISYG) form a helical membrane-spanning segment. Topologically, residues 217–232 (VILSSLKTYSQEKRGK) are cytoplasmic. Residues 233–255 (ALSTCSSGSTVVVLFFVPCIFIY) form a helical membrane-spanning segment. Residues 256 to 266 (VRPVSNFPTDK) lie on the Extracellular side of the membrane. Residues 267–286 (FMTVFYTIITHMLSPLIYTL) traverse the membrane as a helical segment. The Cytoplasmic portion of the chain corresponds to 287-315 (RNSEMRNAIEKLLGKKLTIFIIGGVSVLM).

The protein belongs to the G-protein coupled receptor 1 family.

It localises to the cell membrane. Odorant receptor. This is Olfactory receptor 4A5 (OR4A5) from Homo sapiens (Human).